Here is a 599-residue protein sequence, read N- to C-terminus: Elongation factor 4 (599 aa).

One can recognise a tr-type G domain in the interval 4 to 186 (ENIRNFSIIA…EIVKKIPPPE (183 aa)). Residues 16 to 21 (DHGKST) and 133 to 136 (NKID) each bind GTP.

Belongs to the TRAFAC class translation factor GTPase superfamily. Classic translation factor GTPase family. LepA subfamily.

It localises to the cell inner membrane. It carries out the reaction GTP + H2O = GDP + phosphate + H(+). Required for accurate and efficient protein synthesis under certain stress conditions. May act as a fidelity factor of the translation reaction, by catalyzing a one-codon backward translocation of tRNAs on improperly translocated ribosomes. Back-translocation proceeds from a post-translocation (POST) complex to a pre-translocation (PRE) complex, thus giving elongation factor G a second chance to translocate the tRNAs correctly. Binds to ribosomes in a GTP-dependent manner. In Geobacter metallireducens (strain ATCC 53774 / DSM 7210 / GS-15), this protein is Elongation factor 4.